A 294-amino-acid chain; its full sequence is Nucleotide-binding protein Smlt1108 (294 aa).

16-23 (GLSGSGKS) contributes to the ATP binding site. 69-72 (DVRG) provides a ligand contact to GTP.

This sequence belongs to the RapZ-like family.

Displays ATPase and GTPase activities. The protein is Nucleotide-binding protein Smlt1108 of Stenotrophomonas maltophilia (strain K279a).